The primary structure comprises 1285 residues: MFSPLTKRAKQSSRNEKTPRNRVPPPDSPVTPATQNRNNFISDRPATGTPAPWAPRLSVLARVSPGNNGDKGVDSDQLKPVFVGEFPQLLRDEQSYPGDACVSGGMDKETCLSWFITGSKVFVWSHLTTLPSRKCVVLELPVVVLVNEESGSGLQDGKSWLVNVVSWDTSAGAATRASRSRSPVGVVMCNRKTRAVVYWSDIFSGQEAAPAEKARHLIKRQSNGIRSSRAENSDLNSLITTAVAAAERLCIAIACSSNGELWQFTCSPTGVKSNQVQLNISSSSVSEGYPRSLIWRFSQGLARESCWEFLMLTDCDIHCFTIEPYPDLTVSEVWQHEIVGTDGDSGIKKDIASQKQIWPLDLQVDDQGKVITVLVATICMDRASSSSYTQYSLLTLQHKSEMRFADGREEKVLEKQGPIQVIIPKARVEDKDFLFSMRLRVGGRPPGSAIILSGDGTATVCYCHGSSTRLYKFDLPYDAGKVLDASVLSSTDEHEYGAWTVLTEKAGVWAIPEKAVVLGGVEPPERSLSRKNSSNERSTRDETRVTPYGVDRTAGRENSDIQNIEDKGNPKMGFTRQTARDEESEALLGQLFEGFLLSGKVDGSLEKLSQSGAFDRDGEANVFARKSKSIVDTLAKHWTTTRGAEIVAMTVISSQLVEKQQKHENFLHFLALSKCHEELCSKQRHSLQIILENGEKLAAMIQLRELQNMINQNRSARFGSPQAGSEDQVSCALWDLIQFVGERARRNTVLLMDRDNAEVFYSKVSELEEVFYCLNRQLEYIIRADQPLGTQLQRACELSNACVTILQTALDYKNEHQMWYPPLEGLIPWHSQTVVCNGLWCIASFMLHLLTEASRIDISAKSDIYTHLEVLTEVLLEACAGSTFAKLEREEENKGLLNEYWTRRDTIFDSLYRQAKEFMEAEIQGIRERTEATDEDIFRNRCSNLISIAKRHAGYKIMWKICYDLNDTGLLRNLMHEGVGPQGGFSYFVFQQLYDMKQFSKLLRLGEEFQDELLIFLKRHSDLVWLHQVFLHQFSSASDTLHTLALSQDEESMTTVEERTGPEPEDVQPTFADRKRFLNLSKIAYVADKDADSESKVKRIEADLNLLKLQEEITKALPNGEARNRLFRPEELIETCLNIQGRWTAIKAFEVFAWTSSSFRENHRSLLEECWRNAADQDDWDRHHQASTNEGWSEEETLQNLRNTALFQASKRCYGPTRVNTFDGDFAQVLPLRRENPEDSTSSVEDVLMSHKDFAEAGKLMLTAIMLGCVEEEGIVAEEFSSPME.

Disordered regions lie at residues 1 to 53 (MFSP…PAPW) and 522 to 580 (EPPE…QTAR). Polar residues predominate over residues 31 to 41 (TPATQNRNNFI). Composition is skewed to basic and acidic residues over residues 523–544 (PPER…DETR) and 553–569 (TAGR…DKGN).

This sequence belongs to the nucleoporin Nup133 family. In terms of assembly, part of the nuclear pore complex (NPC). The NPC has an eight-fold symmetrical structure comprising a central transport channel and two rings, the cytoplasmic and nuclear rings, to which eight filaments are attached. The cytoplasmic filaments have loose ends, while the nuclear filaments are joined in a distal ring, forming a nuclear basket. NPCs are highly dynamic in configuration and composition, and can be devided in 3 subcomplexes, the NUP62 subcomplex, the NUP107-160 subcomplex and the NUP93 subcomplex, containing approximately 30 different nucleoporin proteins.

The protein resides in the nucleus envelope. It is found in the nucleus. The protein localises to the nuclear pore complex. The polypeptide is Nuclear pore complex protein NUP133 (Arabidopsis thaliana (Mouse-ear cress)).